Reading from the N-terminus, the 258-residue chain is Ribosomal RNA small subunit methyltransferase A (258 aa).

S-adenosyl-L-methionine contacts are provided by His9, Leu11, Gly36, Glu57, Asp83, and Asn102.

Belongs to the class I-like SAM-binding methyltransferase superfamily. rRNA adenine N(6)-methyltransferase family. RsmA subfamily.

Its subcellular location is the cytoplasm. It carries out the reaction adenosine(1518)/adenosine(1519) in 16S rRNA + 4 S-adenosyl-L-methionine = N(6)-dimethyladenosine(1518)/N(6)-dimethyladenosine(1519) in 16S rRNA + 4 S-adenosyl-L-homocysteine + 4 H(+). Functionally, specifically dimethylates two adjacent adenosines (A1518 and A1519) in the loop of a conserved hairpin near the 3'-end of 16S rRNA in the 30S particle. May play a critical role in biogenesis of 30S subunits. This Caulobacter vibrioides (strain ATCC 19089 / CIP 103742 / CB 15) (Caulobacter crescentus) protein is Ribosomal RNA small subunit methyltransferase A.